A 135-amino-acid chain; its full sequence is Cystatin-1 (135 aa).

The signal sequence occupies residues 1 to 24; that stretch reads MRKHRIVSLVAALLVLLALAAVSS. Positions 86–90 match the Secondary area of contact motif; it reads QVVAG.

This sequence belongs to the cystatin family. Phytocystatin subfamily.

This chain is Cystatin-1 (RAMDAZC7), found in Zea mays (Maize).